Here is a 193-residue protein sequence, read N- to C-terminus: Imidazoleglycerol-phosphate dehydratase (193 aa).

This sequence belongs to the imidazoleglycerol-phosphate dehydratase family.

The protein resides in the cytoplasm. The enzyme catalyses D-erythro-1-(imidazol-4-yl)glycerol 3-phosphate = 3-(imidazol-4-yl)-2-oxopropyl phosphate + H2O. It functions in the pathway amino-acid biosynthesis; L-histidine biosynthesis; L-histidine from 5-phospho-alpha-D-ribose 1-diphosphate: step 6/9. The polypeptide is Imidazoleglycerol-phosphate dehydratase (Saccharolobus islandicus (strain M.16.27) (Sulfolobus islandicus)).